Reading from the N-terminus, the 522-residue chain is Sugar carrier protein A (522 aa).

Over 1–22 (MAGGSLAPAGVAKERAEQYQGK) the chain is Cytoplasmic. A run of 12 helical transmembrane segments spans residues 23-43 (VTFA…IFGY), 87-107 (AFTS…GPIT), 121-141 (ISFL…MLLL), 144-164 (IMLG…LSEM), 173-193 (LNIM…MVNY), 205-225 (LSLG…LLLP), 286-306 (LVMA…IILF), 322-342 (ALYS…ISIA), 351-371 (FLLI…AIIL), 384-404 (SFSV…GWSW), 430-450 (AVNL…LCAF), and 453-473 (GIFL…YIFL). At 474–522 (PETKGVPIEEMIFLWRKHWFWKKIVPGQPEVDDSRESMEMGEAVASRIK) the chain is on the cytoplasmic side.

It belongs to the major facilitator superfamily. Sugar transporter (TC 2.A.1.1) family.

It localises to the membrane. The sequence is that of Sugar carrier protein A (STA) from Ricinus communis (Castor bean).